We begin with the raw amino-acid sequence, 500 residues long: MDSSYKARKEAFVSNLAGGSILEINAVTLVAPTSVLLWSVLQSRLSFFIPYGALALVTDFFLNVLPILFATTLYSSAPWTLNILLALPALILLFTSTPSRTQQKAKPPRPSAAAKKNTPKHASDSPEPLPVHPFLTTYRAAMMVITCVAILAVDFRIFPRRFAKAENWGTSLMDLGVGSFVFSSGVVSARSILKGRNSHSKKAGLWQRLAASARHSIPLLVLGLVRLYSVKGLDYAEHVTEYGVHWNFFFTLGLLPPFVEIFDALAAIIPSYEILSLGIVVLYQVALESTDLKSYILVSPRGPDLLSKNREGVFSFLGYLAIFLTGRAIGIRIIPRGTSASRSPQQARKSVLISLGLQTLVWTTLFVFNSTHAMGLGAGIPVSRRLANMPYVLWVSAFNNAQLFLFCLLESTFFPSIHRETGKDGELERTSFATSRIMTAFNKNGLALFLVANLLTGAVNLSVPTLDVTTAHAMVVLIAYVAMITGVALALDRANIKLSL.

The next 3 membrane-spanning stretches (helical) occupy residues 21-41 (ILEI…WSVL), 47-67 (FFIP…VLPI), and 74-94 (YSSA…ILLF). The tract at residues 100–128 (RTQQKAKPPRPSAAAKKNTPKHASDSPEP) is disordered. Transmembrane regions (helical) follow at residues 133–153 (PFLT…ILAV), 168–188 (WGTS…GVVS), 249–269 (FFTL…AAII), 272–292 (YEIL…STDL), 311–331 (EGVF…AIGI), and 351–368 (VLIS…LFVF). Asparagine 369 is a glycosylation site (N-linked (GlcNAc...) asparagine). Transmembrane regions (helical) follow at residues 389–409 (MPYV…FCLL), 446–466 (LALF…VPTL), and 471–491 (AHAM…ALAL).

It belongs to the PIGW family.

Its subcellular location is the endoplasmic reticulum membrane. It participates in glycolipid biosynthesis; glycosylphosphatidylinositol-anchor biosynthesis. In terms of biological role, probable acetyltransferase, which acetylates the inositol ring of phosphatidylinositol during biosynthesis of GPI-anchor. The protein is GPI-anchored wall transfer protein 1 (gwt1) of Aspergillus oryzae (strain ATCC 42149 / RIB 40) (Yellow koji mold).